We begin with the raw amino-acid sequence, 301 residues long: Oxygen-dependent coproporphyrinogen-III oxidase (301 aa).

Residue Ser90 participates in substrate binding. Positions 94 and 104 each coordinate a divalent metal cation. His104 acts as the Proton donor in catalysis. Substrate is bound at residue 106 to 108 (NVR). A divalent metal cation contacts are provided by His143 and His173. Residues 238 to 273 (YVEFNLVWDRGTLFGLQSGGRTESILMSLPPVVKWR) form an important for dimerization region. 256–258 (GGR) provides a ligand contact to substrate.

This sequence belongs to the aerobic coproporphyrinogen-III oxidase family. As to quaternary structure, homodimer. Requires a divalent metal cation as cofactor.

Its subcellular location is the cytoplasm. It catalyses the reaction coproporphyrinogen III + O2 + 2 H(+) = protoporphyrinogen IX + 2 CO2 + 2 H2O. It participates in porphyrin-containing compound metabolism; protoporphyrin-IX biosynthesis; protoporphyrinogen-IX from coproporphyrinogen-III (O2 route): step 1/1. Its function is as follows. Involved in the heme biosynthesis. Catalyzes the aerobic oxidative decarboxylation of propionate groups of rings A and B of coproporphyrinogen-III to yield the vinyl groups in protoporphyrinogen-IX. The protein is Oxygen-dependent coproporphyrinogen-III oxidase of Nitrosomonas europaea (strain ATCC 19718 / CIP 103999 / KCTC 2705 / NBRC 14298).